The chain runs to 343 residues: Glycerol-3-phosphate dehydrogenase [NAD(P)+] (343 aa).

NADPH contacts are provided by Trp-29, Arg-49, and Lys-122. Residues Lys-122, Gly-150, and Ser-152 each contribute to the sn-glycerol 3-phosphate site. Ala-154 provides a ligand contact to NADPH. Sn-glycerol 3-phosphate contacts are provided by Lys-205, Asp-258, Ser-268, Arg-269, and Asn-270. The active-site Proton acceptor is the Lys-205. Position 269 (Arg-269) interacts with NADPH. NADPH-binding residues include Leu-288 and Glu-290.

Belongs to the NAD-dependent glycerol-3-phosphate dehydrogenase family.

The protein localises to the cytoplasm. The catalysed reaction is sn-glycerol 3-phosphate + NAD(+) = dihydroxyacetone phosphate + NADH + H(+). It catalyses the reaction sn-glycerol 3-phosphate + NADP(+) = dihydroxyacetone phosphate + NADPH + H(+). It participates in membrane lipid metabolism; glycerophospholipid metabolism. Functionally, catalyzes the reduction of the glycolytic intermediate dihydroxyacetone phosphate (DHAP) to sn-glycerol 3-phosphate (G3P), the key precursor for phospholipid synthesis. This is Glycerol-3-phosphate dehydrogenase [NAD(P)+] from Mesorhizobium japonicum (strain LMG 29417 / CECT 9101 / MAFF 303099) (Mesorhizobium loti (strain MAFF 303099)).